An 822-amino-acid polypeptide reads, in one-letter code: ATP-dependent zinc metalloprotease FtsH (822 aa).

Residues 1–76 are Cytoplasmic-facing; that stretch reads MEFNKLELLI…NQKEPGKARK (76 aa). Residues 44–54 show a composition bias toward polar residues; the sequence is SLDQPSDAPSN. A disordered region spans residues 44–71; that stretch reads SLDQPSDAPSNNKKRNLDQPDNPNQKEP. The chain crosses the membrane as a helical span at residues 77-97; it reads IIWSFIIIILVLGVLALIILS. At 98 to 251 the chain is on the extracellular side; that stretch reads GFSFSATSLN…QSMSLPTSYS (154 aa). A helical membrane pass occupies residues 252–272; it reads FYTAASLVLSILPFILLIGII. The Cytoplasmic portion of the chain corresponds to 273–822; the sequence is YYSMRKMGQA…SKESSSDKKK (550 aa). 347–354 provides a ligand contact to ATP; the sequence is GPPGTGKT. Residue histidine 569 participates in Zn(2+) binding. The active site involves glutamate 570. Residues histidine 573 and aspartate 648 each coordinate Zn(2+). Over residues 758-794 the composition is skewed to basic and acidic residues; it reads KKELEEKKKAEDLIRKAKKESEASSKEEKEMDVEKKV. The interval 758-822 is disordered; sequence KKELEEKKKA…SKESSSDKKK (65 aa). The span at 796 to 805 shows a compositional bias: low complexity; it reads KPSASSTEPT. The span at 812–822 shows a compositional bias: basic and acidic residues; that stretch reads PSKESSSDKKK.

It in the central section; belongs to the AAA ATPase family. The protein in the C-terminal section; belongs to the peptidase M41 family. As to quaternary structure, homohexamer. It depends on Zn(2+) as a cofactor.

It localises to the cell membrane. In terms of biological role, acts as a processive, ATP-dependent zinc metallopeptidase for both cytoplasmic and membrane proteins. Plays a role in the quality control of integral membrane proteins. This chain is ATP-dependent zinc metalloprotease FtsH, found in Malacoplasma penetrans (strain HF-2) (Mycoplasma penetrans).